Consider the following 375-residue polypeptide: Stomatin-2 (375 aa).

Residues 1 to 75 form a disordered region; that stretch reads MKTQPSEESA…IPVPTGQPRG (75 aa). Residues 11-50 show a composition bias toward low complexity; the sequence is SPAPVNPGNSGNSGNRRASSTRISFSDQLDGGDSGDSSSN. Residues 120 to 140 traverse the membrane as a helical segment; the sequence is GLGFCGWFLMGLSWIMVISTF.

Belongs to the band 7/mec-2 family.

Its subcellular location is the membrane. Functionally, may be involved in cilia-related function. This is Stomatin-2 (sto-2) from Caenorhabditis elegans.